The sequence spans 466 residues: Cysteine--tRNA ligase (466 aa).

Residue Cys-29 participates in Zn(2+) binding. A 'HIGH' region motif is present at residues 31–41; sequence PTVYNYIHIGN. Residues Cys-209, His-234, and Glu-238 each contribute to the Zn(2+) site. The 'KMSKS' region signature appears at 266-270; that stretch reads KMSKS. Residue Lys-269 participates in ATP binding. Position 270 is a phosphoserine (Ser-270).

Belongs to the class-I aminoacyl-tRNA synthetase family. Monomer. It depends on Zn(2+) as a cofactor.

The protein resides in the cytoplasm. The enzyme catalyses tRNA(Cys) + L-cysteine + ATP = L-cysteinyl-tRNA(Cys) + AMP + diphosphate. This Halalkalibacterium halodurans (strain ATCC BAA-125 / DSM 18197 / FERM 7344 / JCM 9153 / C-125) (Bacillus halodurans) protein is Cysteine--tRNA ligase (cysS).